Reading from the N-terminus, the 154-residue chain is Putative pre-16S rRNA nuclease (154 aa).

It belongs to the YqgF nuclease family.

It is found in the cytoplasm. In terms of biological role, could be a nuclease involved in processing of the 5'-end of pre-16S rRNA. The protein is Putative pre-16S rRNA nuclease of Rickettsia conorii (strain ATCC VR-613 / Malish 7).